A 115-amino-acid polypeptide reads, in one-letter code: uncharacterized protein (115 aa).

Transmembrane regions (helical) follow at residues 6 to 26, 43 to 63, and 84 to 104; these read ILII…PFMV, ALSC…IHIL, and IFKV…VLVQ.

Belongs to the AzlD/HI_1737/HP1330 family.

Its subcellular location is the cell membrane. This is an uncharacterized protein from Helicobacter pylori (strain ATCC 700392 / 26695) (Campylobacter pylori).